The sequence spans 345 residues: Heat-inducible transcription repressor HrcA (345 aa).

Belongs to the HrcA family.

Its function is as follows. Negative regulator of class I heat shock genes (grpE-dnaK-dnaJ and groELS operons). Prevents heat-shock induction of these operons. The protein is Heat-inducible transcription repressor HrcA of Corynebacterium diphtheriae (strain ATCC 700971 / NCTC 13129 / Biotype gravis).